A 185-amino-acid chain; its full sequence is Hypoxanthine/guanine phosphoribosyltransferase (185 aa).

Belongs to the purine/pyrimidine phosphoribosyltransferase family. Archaeal HPRT subfamily. As to quaternary structure, homodimer.

It is found in the cytoplasm. The catalysed reaction is IMP + diphosphate = hypoxanthine + 5-phospho-alpha-D-ribose 1-diphosphate. It catalyses the reaction GMP + diphosphate = guanine + 5-phospho-alpha-D-ribose 1-diphosphate. The protein operates within purine metabolism; IMP biosynthesis via salvage pathway; IMP from hypoxanthine: step 1/1. Its function is as follows. Catalyzes a salvage reaction resulting in the formation of IMP that is energically less costly than de novo synthesis. The protein is Hypoxanthine/guanine phosphoribosyltransferase of Methanococcus maripaludis (strain C7 / ATCC BAA-1331).